The primary structure comprises 1192 residues: Methionine synthase (1192 aa).

The 312-residue stretch at 1 to 312 folds into the Hcy-binding domain; the sequence is MTAADKHLYD…AHIREVAAAV (312 aa). The Zn(2+) site is built by cysteine 231, cysteine 297, and cysteine 298. Residues 343–601 enclose the Pterin-binding domain; that stretch reads VLVIGERTNA…RIPEEQRNVA (259 aa). Residues 635–728 form the B12-binding N-terminal domain; the sequence is RLAELAGLPL…HMERSDDDSG (94 aa). A B12-binding domain is found at 729–866; the sequence is KGRIVLATVK…SAKRGEAPDE (138 aa). Residues 739–743, histidine 742, serine 787, and alanine 845 contribute to the methylcob(III)alamin site; that span reads GDVHD. Residues 860–904 are disordered; sequence RGEAPDENSPEAIKAREKEAERKARHQRSKRIAAQRKAAEEPVEV. Over residues 872 to 881 the composition is skewed to basic and acidic residues; sequence IKAREKEAER. Basic residues predominate over residues 882–893; the sequence is KARHQRSKRIAA. The region spanning 893-1192 is the AdoMet activation domain; it reads AQRKAAEEPV…HHPEAKYFNV (300 aa). S-adenosyl-L-methionine is bound by residues aspartate 940, arginine 1135, and 1189–1190; that span reads YF.

Belongs to the vitamin-B12 dependent methionine synthase family. Methylcob(III)alamin is required as a cofactor. Requires Zn(2+) as cofactor.

It carries out the reaction (6S)-5-methyl-5,6,7,8-tetrahydrofolate + L-homocysteine = (6S)-5,6,7,8-tetrahydrofolate + L-methionine. The protein operates within amino-acid biosynthesis; L-methionine biosynthesis via de novo pathway; L-methionine from L-homocysteine (MetH route): step 1/1. In terms of biological role, catalyzes the transfer of a methyl group from methyl-cobalamin to homocysteine, yielding enzyme-bound cob(I)alamin and methionine. Subsequently, remethylates the cofactor using methyltetrahydrofolate. This is Methionine synthase (metH) from Mycobacterium tuberculosis (strain ATCC 25618 / H37Rv).